The following is a 249-amino-acid chain: 3-deoxy-manno-octulosonate cytidylyltransferase (249 aa).

This sequence belongs to the KdsB family.

The protein localises to the cytoplasm. The enzyme catalyses 3-deoxy-alpha-D-manno-oct-2-ulosonate + CTP = CMP-3-deoxy-beta-D-manno-octulosonate + diphosphate. It functions in the pathway nucleotide-sugar biosynthesis; CMP-3-deoxy-D-manno-octulosonate biosynthesis; CMP-3-deoxy-D-manno-octulosonate from 3-deoxy-D-manno-octulosonate and CTP: step 1/1. The protein operates within bacterial outer membrane biogenesis; lipopolysaccharide biosynthesis. Activates KDO (a required 8-carbon sugar) for incorporation into bacterial lipopolysaccharide in Gram-negative bacteria. The polypeptide is 3-deoxy-manno-octulosonate cytidylyltransferase (Brucella anthropi (strain ATCC 49188 / DSM 6882 / CCUG 24695 / JCM 21032 / LMG 3331 / NBRC 15819 / NCTC 12168 / Alc 37) (Ochrobactrum anthropi)).